A 905-amino-acid chain; its full sequence is Protein translocase subunit SecA (905 aa).

Residues Q87, 105 to 109 (GEGKT), and D512 contribute to the ATP site. The interval 836–905 (DVDAVDEQRK…KKYKHCHGKL (70 aa)) is disordered. Residues 841-858 (DEQRKAADSAPREFRHEQ) show a composition bias toward basic and acidic residues. C890, C892, C901, and H902 together coordinate Zn(2+). Basic residues predominate over residues 896–905 (KKYKHCHGKL).

This sequence belongs to the SecA family. As to quaternary structure, monomer and homodimer. Part of the essential Sec protein translocation apparatus which comprises SecA, SecYEG and auxiliary proteins SecDF-YajC and YidC. The cofactor is Zn(2+).

It localises to the cell inner membrane. The protein localises to the cytoplasm. The enzyme catalyses ATP + H2O + cellular proteinSide 1 = ADP + phosphate + cellular proteinSide 2.. Part of the Sec protein translocase complex. Interacts with the SecYEG preprotein conducting channel. Has a central role in coupling the hydrolysis of ATP to the transfer of proteins into and across the cell membrane, serving both as a receptor for the preprotein-SecB complex and as an ATP-driven molecular motor driving the stepwise translocation of polypeptide chains across the membrane. The protein is Protein translocase subunit SecA of Idiomarina loihiensis (strain ATCC BAA-735 / DSM 15497 / L2-TR).